Reading from the N-terminus, the 388-residue chain is Bifunctional enzyme IspD/IspF (388 aa).

The 2-C-methyl-D-erythritol 4-phosphate cytidylyltransferase stretch occupies residues 1–228 (MRIAALLLAA…GVIDRNLLPR (228 aa)). Positions 228-388 (RVGLGYDVHA…SIMVPDNGEA (161 aa)) are 2-C-methyl-D-erythritol 2,4-cyclodiphosphate synthase. Residues Asp-234 and His-236 each contribute to the a divalent metal cation site. 4-CDP-2-C-methyl-D-erythritol 2-phosphate is bound by residues 234 to 236 (DVH) and 260 to 261 (HS). Residue His-268 coordinates a divalent metal cation. Residues 282–284 (DIG), 358–361 (TTSE), Phe-365, and Arg-368 contribute to the 4-CDP-2-C-methyl-D-erythritol 2-phosphate site.

The protein in the N-terminal section; belongs to the IspD/TarI cytidylyltransferase family. IspD subfamily. In the C-terminal section; belongs to the IspF family. It depends on a divalent metal cation as a cofactor.

The enzyme catalyses 2-C-methyl-D-erythritol 4-phosphate + CTP + H(+) = 4-CDP-2-C-methyl-D-erythritol + diphosphate. It catalyses the reaction 4-CDP-2-C-methyl-D-erythritol 2-phosphate = 2-C-methyl-D-erythritol 2,4-cyclic diphosphate + CMP. It functions in the pathway isoprenoid biosynthesis; isopentenyl diphosphate biosynthesis via DXP pathway; isopentenyl diphosphate from 1-deoxy-D-xylulose 5-phosphate: step 2/6. The protein operates within isoprenoid biosynthesis; isopentenyl diphosphate biosynthesis via DXP pathway; isopentenyl diphosphate from 1-deoxy-D-xylulose 5-phosphate: step 4/6. Its function is as follows. Bifunctional enzyme that catalyzes the formation of 4-diphosphocytidyl-2-C-methyl-D-erythritol from CTP and 2-C-methyl-D-erythritol 4-phosphate (MEP) (IspD), and catalyzes the conversion of 4-diphosphocytidyl-2-C-methyl-D-erythritol 2-phosphate (CDP-ME2P) to 2-C-methyl-D-erythritol 2,4-cyclodiphosphate (ME-CPP) with a corresponding release of cytidine 5-monophosphate (CMP) (IspF). The sequence is that of Bifunctional enzyme IspD/IspF from Gluconobacter oxydans (strain 621H) (Gluconobacter suboxydans).